A 417-amino-acid polypeptide reads, in one-letter code: Tyrosine--tRNA ligase (417 aa).

Tyr-40 contacts L-tyrosine. The short motif at 45–54 (ATAASLHVGH) is the 'HIGH' region element. Residues Tyr-177 and Gln-181 each coordinate L-tyrosine. The short motif at 237 to 241 (KMGKS) is the 'KMSKS' region element. Lys-240 contacts ATP. The S4 RNA-binding domain occupies 351–414 (ISVVQLITRS…AGRKRHALIK (64 aa)).

This sequence belongs to the class-I aminoacyl-tRNA synthetase family. TyrS type 1 subfamily. As to quaternary structure, homodimer.

It localises to the cytoplasm. The enzyme catalyses tRNA(Tyr) + L-tyrosine + ATP = L-tyrosyl-tRNA(Tyr) + AMP + diphosphate + H(+). Its function is as follows. Catalyzes the attachment of tyrosine to tRNA(Tyr) in a two-step reaction: tyrosine is first activated by ATP to form Tyr-AMP and then transferred to the acceptor end of tRNA(Tyr). The sequence is that of Tyrosine--tRNA ligase from Dinoroseobacter shibae (strain DSM 16493 / NCIMB 14021 / DFL 12).